The sequence spans 353 residues: Probable protein phosphatase 2C 48 (353 aa).

In terms of domain architecture, PPM-type phosphatase spans 54–348; that stretch reads FAAVCSRRGE…DDCSAICLFF (295 aa). The Mn(2+) site is built by Asp90, Gly91, Asp293, and Asp339.

Belongs to the PP2C family. Requires Mg(2+) as cofactor. Mn(2+) is required as a cofactor.

The catalysed reaction is O-phospho-L-seryl-[protein] + H2O = L-seryl-[protein] + phosphate. The enzyme catalyses O-phospho-L-threonyl-[protein] + H2O = L-threonyl-[protein] + phosphate. The sequence is that of Probable protein phosphatase 2C 48 from Oryza sativa subsp. japonica (Rice).